Consider the following 335-residue polypeptide: tRNA (adenine(58)-N(1))-methyltransferase catalytic subunit TRM61 (335 aa).

S-adenosyl-L-methionine contacts are provided by residues 114-116 (SAS), E135, R140, 162-163 (DV), and D183. The span at 271–281 (VMKKGPSEEPP) shows a compositional bias: basic and acidic residues. Residues 271 to 302 (VMKKGPSEEPPAKLQKTDNGYKTPKKSTKVKE) are disordered.

It belongs to the class I-like SAM-binding methyltransferase superfamily. TRM61 family. Heterotetramer; composed of two copies of TRM6 and two copies of TRM61.

It localises to the nucleus. The enzyme catalyses adenosine(58) in tRNA + S-adenosyl-L-methionine = N(1)-methyladenosine(58) in tRNA + S-adenosyl-L-homocysteine + H(+). Its function is as follows. Catalytic subunit of tRNA (adenine-N(1)-)-methyltransferase, which catalyzes the formation of N(1)-methyladenine at position 58 (m1A58) in initiator methionyl-tRNA. The sequence is that of tRNA (adenine(58)-N(1))-methyltransferase catalytic subunit TRM61 (TRM61) from Candida albicans (strain SC5314 / ATCC MYA-2876) (Yeast).